The sequence spans 363 residues: UDP-N-acetylglucosamine--N-acetylmuramyl-(pentapeptide) pyrophosphoryl-undecaprenol N-acetylglucosamine transferase (363 aa).

Residues 12-14 (TGG), Asn122, Arg164, Ser191, Ile245, and Gln290 each bind UDP-N-acetyl-alpha-D-glucosamine.

The protein belongs to the glycosyltransferase 28 family. MurG subfamily.

The protein resides in the cell membrane. The catalysed reaction is di-trans,octa-cis-undecaprenyl diphospho-N-acetyl-alpha-D-muramoyl-L-alanyl-D-glutamyl-meso-2,6-diaminopimeloyl-D-alanyl-D-alanine + UDP-N-acetyl-alpha-D-glucosamine = di-trans,octa-cis-undecaprenyl diphospho-[N-acetyl-alpha-D-glucosaminyl-(1-&gt;4)]-N-acetyl-alpha-D-muramoyl-L-alanyl-D-glutamyl-meso-2,6-diaminopimeloyl-D-alanyl-D-alanine + UDP + H(+). It functions in the pathway cell wall biogenesis; peptidoglycan biosynthesis. Its function is as follows. Cell wall formation. Catalyzes the transfer of a GlcNAc subunit on undecaprenyl-pyrophosphoryl-MurNAc-pentapeptide (lipid intermediate I) to form undecaprenyl-pyrophosphoryl-MurNAc-(pentapeptide)GlcNAc (lipid intermediate II). This Lawsonia intracellularis (strain PHE/MN1-00) protein is UDP-N-acetylglucosamine--N-acetylmuramyl-(pentapeptide) pyrophosphoryl-undecaprenol N-acetylglucosamine transferase.